Here is a 61-residue protein sequence, read N- to C-terminus: Probable tautomerase SAV1363 (61 aa).

Catalysis depends on proline 2, which acts as the Proton acceptor; via imino nitrogen.

It belongs to the 4-oxalocrotonate tautomerase family.

This chain is Probable tautomerase SAV1363, found in Staphylococcus aureus (strain Mu50 / ATCC 700699).